A 179-amino-acid chain; its full sequence is M-phase-specific PLK1-interacting protein (179 aa).

A disordered region spans residues 1-135; the sequence is MQRQNFRPPT…RVREKRMSNE (135 aa). R37 carries the asymmetric dimethylarginine modification. Residues S40 and S47 each carry the phosphoserine modification. At T51 the chain carries Phosphothreonine. Omega-N-methylarginine is present on R57. An asymmetric dimethylarginine mark is found at R59 and R68. The segment covering 60 to 71 has biased composition (low complexity); the sequence is PYGSSHSPRHGG. S72 carries the phosphoserine modification. Position 77 is an asymmetric dimethylarginine (R77). Low complexity predominate over residues 79-109; sequence GSPSPGGYPGSYSRSPAGSQQQFGYSPGQQQ. A phosphoserine mark is found at S80, S82, S93, S104, and S115. The segment covering 110–122 has biased composition (polar residues); the sequence is THPQGSPRTSTPF. R117 is modified (omega-N-methylarginine). T120 is modified (phosphothreonine). Residues S124 and S133 each carry the phosphoserine modification.

Interacts with PLK1; phosphorylation-dependent. Post-translationally, phosphorylated during mitosis in the cell cycle probably by CDK1. In terms of tissue distribution, expressed at highest levels in liver and kidney; intermediate expression in skeletal muscle, pancreas, heart and placenta; low expression in brain and lung. Expressed in epidermis and hair follicles.

It is found in the nucleus. The protein localises to the cytoplasm. The protein resides in the cytoskeleton. It localises to the microtubule organizing center. Its subcellular location is the centrosome. May play a role in maintenance of cell cycle integrity by regulating mitosis or cytokinesis. The polypeptide is M-phase-specific PLK1-interacting protein (MPLKIP) (Homo sapiens (Human)).